The sequence spans 314 residues: Cytochrome c biogenesis protein CcsA (314 aa).

8 helical membrane passes run 15 to 35, 48 to 68, 73 to 93, 102 to 122, 148 to 168, 216 to 236, 250 to 267, and 277 to 297; these read VSFIGILIFYFLLINLPISLI, LITILINLFIALQLISRWIIS, ISNLYESLYFLVWGITLGQLL, IIPAIAIPIELLTIAFACFVL, VMLSYAALIMGSLLSASVLFI, SILVGFVLLTLGLITGAIWAN, TWAFISWLFYAAYLHMRI, and ALLATSGFFVVLICYIGVNFL.

This sequence belongs to the CcmF/CycK/Ccl1/NrfE/CcsA family. In terms of assembly, may interact with ccs1.

The protein resides in the cellular thylakoid membrane. Functionally, required during biogenesis of c-type cytochromes (cytochrome c6 and cytochrome f) at the step of heme attachment. This Prochlorococcus marinus subsp. pastoris (strain CCMP1986 / NIES-2087 / MED4) protein is Cytochrome c biogenesis protein CcsA.